The following is a 455-amino-acid chain: MVEQGDAAPLLRWAEGPAVSVPQDPALQAGGWVRGGSGGGRVAAEAPRRREPEEPAPPEVLLQPGRLELGDVEEDQVVAVFVVTFDPRSGNMVEWCLPQDIDLEGVEFKSMASGSHKVQSDFIYFRKGPFFGLACFANMPVESELERGARMKSVGILSPSYTLLYRYMHFLENQVRHQLEMPGHYSHLAAFYEDKKGVLHAGPGRGGSLPPVYWLPSIHRYMYPEMKITHPAGCMSQFIKFFGEQILILWKFALLRKRILIFSPPPVGVVCYRVYCCCCLANVSLPGIGGTIPESKPFFYVNVADIESLEVEVSYVACTTEKIFEEKRELYDVYVDNQNVKTHHDHLQPLLKLNSADREKYRRLNEQRQMLLYSQEVEGDYSPCEEDLFVLFFLEQNNRIFQTLLEVSASQDKTLTAEHARGMGLDPQGDRSFLMDLLEAYGIDVMLVIDNPCCP.

Val2 carries the N-acetylvaline modification. Residues 15–187 form the uDENN domain; that stretch reads EGPAVSVPQD…QLEMPGHYSH (173 aa). Positions 21 to 61 are disordered; the sequence is VPQDPALQAGGWVRGGSGGGRVAAEAPRRREPEEPAPPEVL. Positions 32–41 are enriched in gly residues; that stretch reads WVRGGSGGGR. Omega-N-methylarginine is present on Arg41. Positions 214–362 constitute a cDENN domain; it reads WLPSIHRYMY…LNSADREKYR (149 aa). One can recognise a dDENN domain in the interval 364-455; the sequence is LNEQRQMLLY…MLVIDNPCCP (92 aa).

This sequence belongs to the DENND11 family. As to expression, expressed within the somatodendritic compartment of neurons, is also present on dendritic growth cones, but is not found in astrocytes.

In terms of biological role, probable guanine nucleotide exchange factor (GEF). May promote the exchange of GDP to GTP, converting inactive GDP-bound small GTPases into their active GTP-bound form. May play a role in neuritogenesis, as well as in neuronal recovery and/or restructuring in the hippocampus following transient cerebral ischemia. The chain is DENN domain-containing protein 11 (Dennd11) from Rattus norvegicus (Rat).